The following is a 311-amino-acid chain: MSKVAIIGSGFVGATSAFTLALSGTVTDIVLVDLNKDKAIGDALDISHGIPLIQPVNVYAGDYKDVKGADVIVVTAGAAQKPGETRLDLVKKNTAIFKSMIPELLKYNDKAIYLIVTNPVDILTYVTYKISGLPWGRVFGSGTVLDSSRFRYLLSKHCNIDPRNVHGRIIGEHGDTEFAAWSITNISGISFNEYCSICGRVCNTNFRKEVEEEVVNAAYKIIDKKGATYYAVAVAVRRIVECILRDENSILTVSSPLNGQYGVKDVSLSLPSIVGRNGVARILDLPLSDEEVEKFRHSASVMADVIKQLDI.

Residues valine 12, aspartate 33, lysine 38, tyrosine 63, and 77–78 (GA) each bind NAD(+). Positions 80 and 86 each coordinate substrate. NAD(+) is bound by residues serine 99, 116–118 (VTN), and serine 141. 118 to 121 (NPVD) provides a ligand contact to substrate. 146–149 (DSSR) contributes to the substrate binding site. The beta-D-fructose 1,6-bisphosphate site is built by arginine 151 and histidine 166. Histidine 173 functions as the Proton acceptor in the catalytic mechanism. The residue at position 219 (tyrosine 219) is a Phosphotyrosine. Substrate is bound at residue threonine 228.

This sequence belongs to the LDH/MDH superfamily. LDH family. As to quaternary structure, homotetramer.

It localises to the cytoplasm. It carries out the reaction (S)-lactate + NAD(+) = pyruvate + NADH + H(+). The protein operates within fermentation; pyruvate fermentation to lactate; (S)-lactate from pyruvate: step 1/1. With respect to regulation, allosterically activated by fructose 1,6-bisphosphate (FBP). In terms of biological role, catalyzes the conversion of lactate to pyruvate. The sequence is that of L-lactate dehydrogenase from Thermoanaerobacterium saccharolyticum (strain DSM 8691 / JW/SL-YS485).